Reading from the N-terminus, the 274-residue chain is Bis(5'-nucleosyl)-tetraphosphatase, symmetrical (274 aa).

Belongs to the Ap4A hydrolase family.

The catalysed reaction is P(1),P(4)-bis(5'-adenosyl) tetraphosphate + H2O = 2 ADP + 2 H(+). Functionally, hydrolyzes diadenosine 5',5'''-P1,P4-tetraphosphate to yield ADP. This Buchnera aphidicola subsp. Acyrthosiphon pisum (strain 5A) protein is Bis(5'-nucleosyl)-tetraphosphatase, symmetrical.